Consider the following 864-residue polypeptide: Protein PAT1 homolog 1 (864 aa).

Residues 427–439 (PPNSRPNGPQFSG) are compositionally biased toward polar residues. Disordered stretches follow at residues 427-460 (PPNSRPNGPQFSGPQVGPHSPGARGQQRRNSGMP), 518-539 (WTAHPKPESKQPLPASSESRKD), and 551-602 (EMQK…STHN). Residues 551 to 580 (EMQKERLRDREKERQRERQERIDRGEERKP) are compositionally biased toward basic and acidic residues.

The protein belongs to the PAT1 family.

Its subcellular location is the cytoplasm. The protein localises to the P-body. In terms of biological role, RNA-binding protein involved in deadenylation-dependent decapping of mRNAs, leading to the degradation of mRNAs. Acts as a scaffold protein that connects deadenylation and decapping machinery. Required for the recruitment of P-body components such as cgh-1 in somatic blastomeres. May play a role in recruiting the decapping enzyme dcap-1 to cytoplasmic puncta in the cell body of the posterior touch receptor neuron, PLM. In Caenorhabditis briggsae, this protein is Protein PAT1 homolog 1 (patr-1).